The following is a 385-amino-acid chain: Histidinol-phosphate aminotransferase (385 aa).

Residue lysine 230 is modified to N6-(pyridoxal phosphate)lysine.

It belongs to the class-II pyridoxal-phosphate-dependent aminotransferase family. Pyridoxal 5'-phosphate is required as a cofactor.

It catalyses the reaction L-histidinol phosphate + 2-oxoglutarate = 3-(imidazol-4-yl)-2-oxopropyl phosphate + L-glutamate. The protein operates within amino-acid biosynthesis; L-histidine biosynthesis; L-histidine from 5-phospho-alpha-D-ribose 1-diphosphate: step 7/9. The chain is Histidinol-phosphate aminotransferase from Saccharomyces cerevisiae (strain ATCC 204508 / S288c) (Baker's yeast).